Consider the following 593-residue polypeptide: Cell surface glycoprotein (593 aa).

An N-terminal signal peptide occupies residues 1-22; the sequence is MRKFTLLMLLLIVISMSGIAGA. 19 N-linked (GalNAc...) asparagine glycosylation sites follow: Asn29, Asn58, Asn66, Asn74, Asn114, Asn122, Asn145, Asn148, Asn158, Asn176, Asn208, Asn231, Asn326, Asn336, Asn340, Asn431, Asn471, Asn500, and Asn516.

In terms of processing, N-glycosylated; contains glycans composed of methyl-Man, Man and GalNAc residues in a molar ratio of 2:3:1.

It is found in the secreted. Its subcellular location is the cell wall. The protein resides in the S-layer. In terms of biological role, the S-layer is a paracrystalline mono-layered assembly of proteins which coat the surface of the cell. In Methanothermus fervidus (strain ATCC 43054 / DSM 2088 / JCM 10308 / V24 S), this protein is Cell surface glycoprotein (slgA).